The chain runs to 337 residues: tRNA-cytidine(32) 2-sulfurtransferase (337 aa).

The PP-loop motif signature appears at 71-76 (SGGKDS). The [4Fe-4S] cluster site is built by C146, C149, and C237.

This sequence belongs to the TtcA family. In terms of assembly, homodimer. Requires Mg(2+) as cofactor. [4Fe-4S] cluster is required as a cofactor.

It localises to the cytoplasm. It carries out the reaction cytidine(32) in tRNA + S-sulfanyl-L-cysteinyl-[cysteine desulfurase] + AH2 + ATP = 2-thiocytidine(32) in tRNA + L-cysteinyl-[cysteine desulfurase] + A + AMP + diphosphate + H(+). Its pathway is tRNA modification. Catalyzes the ATP-dependent 2-thiolation of cytidine in position 32 of tRNA, to form 2-thiocytidine (s(2)C32). The sulfur atoms are provided by the cysteine/cysteine desulfurase (IscS) system. This Burkholderia vietnamiensis (strain G4 / LMG 22486) (Burkholderia cepacia (strain R1808)) protein is tRNA-cytidine(32) 2-sulfurtransferase.